Here is a 295-residue protein sequence, read N- to C-terminus: Indole-3-glycerol phosphate synthase (295 aa).

Belongs to the TrpC family.

It carries out the reaction 1-(2-carboxyphenylamino)-1-deoxy-D-ribulose 5-phosphate + H(+) = (1S,2R)-1-C-(indol-3-yl)glycerol 3-phosphate + CO2 + H2O. It functions in the pathway amino-acid biosynthesis; L-tryptophan biosynthesis; L-tryptophan from chorismate: step 4/5. The polypeptide is Indole-3-glycerol phosphate synthase (Prochlorococcus marinus (strain MIT 9301)).